Consider the following 642-residue polypeptide: Zinc finger protein 398 (642 aa).

Disordered stretches follow at residues M1 to P24 and E198 to S225. Residues V143–I214 form the KRAB domain. The segment covering A207–E220 has biased composition (acidic residues). Residue K265 forms a Glycyl lysine isopeptide (Lys-Gly) (interchain with G-Cter in SUMO2) linkage. The segment at F343–H364 adopts a C2H2-type 1; atypical zinc-finger fold. The C2H2-type 2; degenerate zinc finger occupies L370–H392. 7 consecutive C2H2-type zinc fingers follow at residues P398 to H420, F427 to H449, F455 to H477, F483 to H505, Y511 to H533, F539 to H561, and Y567 to H590. Residues R587–L615 are disordered.

It belongs to the krueppel C2H2-type zinc-finger protein family.

The protein resides in the nucleus. Functions as a transcriptional activator. The sequence is that of Zinc finger protein 398 (ZNF398) from Homo sapiens (Human).